Reading from the N-terminus, the 74-residue chain is MNANSIFLCFFIMLIGCTLTHSCPSGCYCDQVDGNKCRPEEGTNPHLCLGKYCKTPDSSSVITGNQDEKTQAKG.

A signal peptide spans 1 to 22; sequence MNANSIFLCFFIMLIGCTLTHS.

The protein belongs to the scoloptoxin-09 family. Contains 3 disulfide bonds. As to expression, expressed by the venom gland.

The protein localises to the secreted. In Scolopendra morsitans (Tanzanian blue ringleg centipede), this protein is U-scoloptoxin(09)-Sm3a.